The following is a 367-amino-acid chain: CCCH-type zinc finger protein moe-3 (367 aa).

Residues 1-15 (MSKVKGDLEKSDKRP) show a composition bias toward basic and acidic residues. Residues 1–57 (MSKVKGDLEKSDKRPPSSMSTGSADSGVFSSGVHASSPSHSQGSSSQSGPPSPTTQL) form a disordered region. A compositionally biased stretch (low complexity) spans 30–49 (SSGVHASSPSHSQGSSSQSG). Residues 63–92 (ETANLIAVNEQLRKEIAENKQIQTNQMRAL) are a coiled coil. The interval 107 to 126 (SISPHHGFPQRPPRGERRMQ) is disordered. 2 consecutive C3H1-type zinc fingers follow at residues 130-158 (SYKTVICQAWLESKTCTFAENCRFAHGEE) and 172-200 (KYKTKLCDKYTTTGLCPYGKRCLFIHPDN). The segment at 235–268 (NTRNSYNQQPPPMGGLEMQSSPMKSSSDSSHMRS) is disordered. Low complexity predominate over residues 252 to 268 (MQSSPMKSSSDSSHMRS).

As to expression, exclusively expressed in the hermaphrodite gonad. Weakly distributed throughout gonadal oocytes from the mitotic stage to the developing diakinesis stage, with expression restricted to the distal region of the gonad.

In terms of biological role, zinc-finger protein that may play a role in oocyte maturation and fertility. The protein is CCCH-type zinc finger protein moe-3 of Caenorhabditis elegans.